The following is a 431-amino-acid chain: Histidine--tRNA ligase (431 aa).

This sequence belongs to the class-II aminoacyl-tRNA synthetase family. As to quaternary structure, homodimer.

The protein localises to the cytoplasm. It catalyses the reaction tRNA(His) + L-histidine + ATP = L-histidyl-tRNA(His) + AMP + diphosphate + H(+). This Neisseria meningitidis serogroup C (strain 053442) protein is Histidine--tRNA ligase.